The chain runs to 187 residues: Elongation factor P (187 aa).

It belongs to the elongation factor P family.

Its subcellular location is the cytoplasm. The protein operates within protein biosynthesis; polypeptide chain elongation. Functionally, involved in peptide bond synthesis. Stimulates efficient translation and peptide-bond synthesis on native or reconstituted 70S ribosomes in vitro. Probably functions indirectly by altering the affinity of the ribosome for aminoacyl-tRNA, thus increasing their reactivity as acceptors for peptidyl transferase. This is Elongation factor P from Mycobacterium leprae (strain Br4923).